The chain runs to 163 residues: HTH-type transcriptional regulator IscR (163 aa).

In terms of domain architecture, HTH rrf2-type spans 2–131; that stretch reads RLTSKGRYAV…NNITLGELVN (130 aa). The H-T-H motif DNA-binding region spans 28–51; sequence LADISERQGISLSYLEQLFSRLRK. Residues Cys-92, Cys-98, and Cys-104 each coordinate [2Fe-2S] cluster.

Requires [2Fe-2S] cluster as cofactor.

Functionally, regulates the transcription of several operons and genes involved in the biogenesis of Fe-S clusters and Fe-S-containing proteins. The polypeptide is HTH-type transcriptional regulator IscR (Enterobacter sp. (strain 638)).